Consider the following 393-residue polypeptide: Protein TsgA (393 aa).

The next 12 helical transmembrane spans lie at Trp11–Met31, Phe51–Pro71, Phe78–Leu98, Thr101–Ile121, Leu134–Phe154, Trp162–Gly182, Ile206–Ile226, Thr245–Leu265, Ile273–Pro293, Ala297–Leu317, Phe332–Val352, and Leu361–Val381.

This sequence belongs to the major facilitator superfamily. TsgA family.

Its subcellular location is the cell inner membrane. The sequence is that of Protein TsgA from Shigella boydii serotype 4 (strain Sb227).